Here is a 74-residue protein sequence, read N- to C-terminus: Cytochrome b559 subunit alpha (74 aa).

A helical transmembrane segment spans residues 22 to 36; sequence VIHTVTIPSLFVAGW. Residue His24 participates in heme binding.

It belongs to the PsbE/PsbF family. In terms of assembly, heterodimer of an alpha subunit and a beta subunit. PSII is composed of 1 copy each of membrane proteins PsbA, PsbB, PsbC, PsbD, PsbE, PsbF, PsbH, PsbI, PsbJ, PsbK, PsbL, PsbM, PsbT, PsbX, PsbY, PsbZ, Psb30/Ycf12, at least 3 peripheral proteins of the oxygen-evolving complex and a large number of cofactors. It forms dimeric complexes. It depends on heme b as a cofactor.

It is found in the plastid. The protein resides in the cyanelle thylakoid membrane. In terms of biological role, this b-type cytochrome is tightly associated with the reaction center of photosystem II (PSII). PSII is a light-driven water:plastoquinone oxidoreductase that uses light energy to abstract electrons from H(2)O, generating O(2) and a proton gradient subsequently used for ATP formation. It consists of a core antenna complex that captures photons, and an electron transfer chain that converts photonic excitation into a charge separation. The sequence is that of Cytochrome b559 subunit alpha from Cyanophora paradoxa.